The sequence spans 1485 residues: Chromosome partition protein MukB (1485 aa).

ATP is bound at residue 34-41; that stretch reads GGNGAGKS. 2 coiled-coil regions span residues 337 to 480 and 509 to 605; these read LNLV…QAYQ and QHLA…PVWL. The interval 666–783 is flexible hinge; sequence PSGAEDARLI…EVPLFGRAAR (118 aa). 2 coiled-coil regions span residues 835-915 and 977-1116; these read EAEI…IQQH and GMLT…AKAG.

It belongs to the SMC family. MukB subfamily. Homodimerization via its hinge domain. Binds to DNA via its C-terminal region. Interacts, and probably forms a ternary complex, with MukE and MukF via its C-terminal region. The complex formation is stimulated by calcium or magnesium. Interacts with tubulin-related protein FtsZ.

The protein localises to the cytoplasm. The protein resides in the nucleoid. Plays a central role in chromosome condensation, segregation and cell cycle progression. Functions as a homodimer, which is essential for chromosome partition. Involved in negative DNA supercoiling in vivo, and by this means organize and compact chromosomes. May achieve or facilitate chromosome segregation by condensation DNA from both sides of a centrally located replisome during cell division. This chain is Chromosome partition protein MukB, found in Yersinia pseudotuberculosis serotype IB (strain PB1/+).